We begin with the raw amino-acid sequence, 312 residues long: Glyoxylate/hydroxypyruvate reductase A (312 aa).

The active site involves arginine 227. The active-site Proton donor is the histidine 275.

Belongs to the D-isomer specific 2-hydroxyacid dehydrogenase family. GhrA subfamily.

The protein resides in the cytoplasm. It carries out the reaction glycolate + NADP(+) = glyoxylate + NADPH + H(+). It catalyses the reaction (R)-glycerate + NAD(+) = 3-hydroxypyruvate + NADH + H(+). The catalysed reaction is (R)-glycerate + NADP(+) = 3-hydroxypyruvate + NADPH + H(+). Its function is as follows. Catalyzes the NADPH-dependent reduction of glyoxylate and hydroxypyruvate into glycolate and glycerate, respectively. Inactive towards 2-oxo-D-gluconate, 2-oxoglutarate, oxaloacetate and pyruvate. Only D- and L-glycerate are involved in the oxidative activity with NADP. Activity with NAD is very low. The polypeptide is Glyoxylate/hydroxypyruvate reductase A (ghrA) (Escherichia coli (strain K12)).